Reading from the N-terminus, the 184-residue chain is dCTP deaminase (184 aa).

Residue 107 to 112 (KSTYAR) participates in dCTP binding. The Proton donor/acceptor role is filled by E133. Residues Q152, Y166, and Q176 each contribute to the dCTP site.

Belongs to the dCTP deaminase family. Homotrimer.

It carries out the reaction dCTP + H2O + H(+) = dUTP + NH4(+). The protein operates within pyrimidine metabolism; dUMP biosynthesis; dUMP from dCTP (dUTP route): step 1/2. Functionally, catalyzes the deamination of dCTP to dUTP. This is dCTP deaminase from Granulibacter bethesdensis (strain ATCC BAA-1260 / CGDNIH1).